Here is a 306-residue protein sequence, read N- to C-terminus: Enoyl-CoA isomerase/hydratase MYCGRDRAFT_76805 (306 aa).

Substrate-binding positions include 103–107 (AGADL) and Gly-150.

Belongs to the enoyl-CoA hydratase/isomerase family.

The catalysed reaction is a (3S)-3-hydroxyacyl-CoA = a (2E)-enoyl-CoA + H2O. It carries out the reaction a 4-saturated-(3S)-3-hydroxyacyl-CoA = a (3E)-enoyl-CoA + H2O. It functions in the pathway siderophore biosynthesis. In terms of biological role, enoyl-CoA isomerase/hydratase involved in the biosynthesis of a ferrichrome A-like siderophore which may contribute to organismal virulence. The first step of siderophore biosynthesis is performed by the HMG-CoA synthase (HMGS) MYCGRDRAFT_54740 which catalyzes the generation of HMG-CoA and CoA using acetoacetyl-CoA and acetyl-CoA as substrates. The enoyl-CoA isomerase/hydratase MYCGRDRAFT_76805 then catalyzes the conversion of HMG-CoA to methylglutaconyl-CoA. The acyltransferase MYCGRDRAFT_85486 then fuses methylglutaconyl-CoA with hydroxyornithine to yield methylglutaconyl hydroxyornithine. Methylglutaconyl hydroxyornithine is then available for use by the nonribosomal peptide synthetase NRPS2 to generate the ferrichrome A-like siderophore. This chain is Enoyl-CoA isomerase/hydratase MYCGRDRAFT_76805, found in Zymoseptoria tritici (strain CBS 115943 / IPO323) (Speckled leaf blotch fungus).